A 1230-amino-acid polypeptide reads, in one-letter code: MSILSENNPTPTSITDPNKSSHLHNPELNSGTRVASGPGPGPEAESTPLAPPTEVMNTTSANTSSLSLGSPMHEKIKQFDQDEVDTGETNDRTIESGSGDIDDSQQSHNNNNNNNNNNNESNPESSEGDDEKTQGMPPRMPGTFNVKGLHQGDDSDNEKQYTELTKSINKRTSKDSYSPGTLESPGTLNALETNNVSPAVIEEEQHTSSLEDLSLSLQHQNENARLSAPRSAPPQVPTSKTSSFHDMSSVISSSTSVHKIPSNPTSTRGSHLSSYKSTLDPGKPAQAAAPPPPEIDIDNLLTKSELDSETDTLSSATNSPNLLRNDTLQGIPTRDDENIDDSPRQLSQNTSATSRNTSGTSTSTVVKNSRSGTSKSTSTSTAHNQTAAITPIIPSHNKFHQQVINTNATNSLSSLEPLGVGINSNSSPKSGKKRKSGSKVRGVFSSMFGKNKSTSSSSSSNSGSNSHSQEVNIKISTPFNAKHLAHVGIDDNGSYTGLPIEWERLLSASGITKKEQQQHPQAVMDIVAFYQDTSENPDDAAFKKFHFDNNKSSSSGWSNENTPPATPGGSNSGSGSGGGGAPSSPHRTPPSSIIEKNNVEQKVITPSQSMPTKTESKQSENQHPHEDNATQYTPRTPTSHVQEGQFIPSRPAPKPPSTPLSSMSVSHKTPSSQSLPRSDSQSDIRSSTPKSHQDVSPSKIKIRSISSKSLKSMRSRKSGDKFTHIAPAPPPPSLPSIPKSKSHSASLSSQLRPATNGSTTAPIPASAAFGGENNALPKQRINEFKAHRAPPPPPSAPPAPPVPPAPPANLLSEQTSEIPQQRTAPSQALADVTAPTNIYEIQQTKYQEAQQKLREKKARELEEIQRLREKNERQNRQQETGQNNADTASGGSNIAPPVPVPNKKPPSGSGGGRDAKQAALIAQKKREEKKRKNLQIIAKLKTICNPGDPNELYVDLVKIGQGASGGVFLAHDVRDKSNIVAIKQMNLEQQPKKELIINEILVMKGSSHPNIVNFIDSYLLKGDLWVIMEYMEGGSLTDIVTHSVMTEGQIGVVCRETLKGLKFLHSKGVIHRDIKSDNILLNMDGNIKITDFGFCAQINEINSKRITMVGTPYWMAPEIVSRKEYGPKVDVWSLGIMIIEMLEGEPPYLNETPLRALYLIATNGTPKLKDPESLSYDIRKFLAWCLQVDFNKRADADELLHDNFITECDDVSSLSPLVKIARLKKMSESD.

Positions 1–20 (MSILSENNPTPTSITDPNKS) are enriched in polar residues. Disordered stretches follow at residues 1–384 (MSIL…TAHN) and 413–470 (SSLE…HSQE). Low complexity-rich tracts occupy residues 57-70 (NTTSANTSSLSLGS) and 96-125 (SGSGDIDDSQQSHNNNNNNNNNNNESNPES). Residues 150 to 161 (HQGDDSDNEKQY) are compositionally biased toward basic and acidic residues. 3 stretches are compositionally biased toward polar residues: residues 175–197 (DSYSPGTLESPGTLNALETNNVS), 207–224 (TSSLEDLSLSLQHQNENA), and 237–246 (PTSKTSSFHD). Residues 248–257 (SSVISSSTSV) are compositionally biased toward low complexity. Composition is skewed to polar residues over residues 262–277 (SNPTSTRGSHLSSYKS) and 311–330 (DTLSSATNSPNLLRNDTLQG). Low complexity-rich tracts occupy residues 349-381 (NTSATSRNTSGTSTSTVVKNSRSGTSKSTSTST) and 439-468 (KVRGVFSSMFGKNKSTSSSSSSNSGSNSHS). In terms of domain architecture, CRIB spans 475-488 (ISTPFNAKHLAHVG). Disordered stretches follow at residues 545-831 (FHFD…ALAD) and 867-919 (LREK…KQAA). The span at 550-561 (NKSSSSGWSNEN) shows a compositional bias: polar residues. A compositionally biased stretch (gly residues) spans 570-581 (SNSGSGSGGGGA). Positions 604–613 (ITPSQSMPTK) are enriched in polar residues. Over residues 614-628 (TESKQSENQHPHEDN) the composition is skewed to basic and acidic residues. Over residues 629–642 (ATQYTPRTPTSHVQ) the composition is skewed to polar residues. 3 stretches are compositionally biased toward low complexity: residues 670-683 (PSSQSLPRSDSQSD), 696-710 (SPSKIKIRSISSKSL), and 736-749 (SIPKSKSHSASLSS). The span at 750 to 761 (QLRPATNGSTTA) shows a compositional bias: polar residues. Positions 789 to 807 (APPPPPSAPPAPPVPPAPP) are enriched in pro residues. Residues 811-826 (LSEQTSEIPQQRTAPS) show a composition bias toward polar residues. A compositionally biased stretch (basic and acidic residues) spans 867 to 876 (LREKNERQNR). A compositionally biased stretch (polar residues) spans 877 to 892 (QQETGQNNADTASGGS). One can recognise a Protein kinase domain in the interval 953–1205 (YVDLVKIGQG…ADELLHDNFI (253 aa)). ATP-binding positions include 959–967 (IGQGASGGV) and Lys-983. Residue Asp-1073 is the Proton acceptor of the active site.

It belongs to the protein kinase superfamily. STE Ser/Thr protein kinase family. STE20 subfamily.

Its subcellular location is the cytoplasm. It localises to the nucleus. It carries out the reaction L-seryl-[protein] + ATP = O-phospho-L-seryl-[protein] + ADP + H(+). The catalysed reaction is L-threonyl-[protein] + ATP = O-phospho-L-threonyl-[protein] + ADP + H(+). Functionally, MAP4K component of the MAPK pathway required for the mating pheromone response, and the regulation of cell polarity and cell cycle. Phosphorylates histone H2B to form H2BS10ph. Required for hyphal formation and virulence. The protein is Serine/threonine-protein kinase CST20 (CST20) of Candida albicans (Yeast).